The primary structure comprises 1015 residues: Collagen alpha-2(I) chain (1015 aa).

Residues 1-1015 (SGGFDFSFLP…FGYEGDFYRA (1015 aa)) are disordered. Residues proline 10 and proline 13 each carry the 4-hydroxyproline modification. A compositionally biased stretch (gly residues) spans 20–30 (KGVGLGPGPMG). Proline 38 carries the post-translational modification 4-hydroxyproline. Over residues 43-69 (QGPAGEPGEPGQTGPAGARGPAGPPGK) the composition is skewed to low complexity. Residues 70–84 (AGEDGHPGKPGRPGE) show a composition bias toward basic and acidic residues. The residue at position 106 (lysine 106) is a 5-hydroxylysine; alternate. Lysine 106 carries O-linked (Gal...) hydroxylysine; alternate glycosylation. 3 stretches are compositionally biased toward low complexity: residues 140-169 (VGAP…SAGP), 194-208 (AGPR…VSGP), and 235-250 (PGPV…RGLV). A compositionally biased stretch (gly residues) spans 302–311 (GLRGGPGSRG). Low complexity predominate over residues 324 to 340 (PAGSRGASGPAGVRGPS). A 4-hydroxyproline mark is found at proline 346 and proline 349. The span at 441-450 (GVQGGKGEQG) shows a compositional bias: gly residues. Residues 497–514 (PGESGAAGPVGPIGSRGP) show a composition bias toward low complexity. The span at 534-545 (GTAGPGSGGLPG) shows a compositional bias: gly residues. 2 stretches are compositionally biased toward low complexity: residues 568-612 (VGTT…PRGS) and 619-639 (VGPA…QPGA). Over residues 640-649 (KGERGTKGPK) the composition is skewed to basic and acidic residues. A compositionally biased stretch (low complexity) spans 657-670 (PTGPVGAAGPSGPN). Residues 674-686 (GPAGGRGDGGPPG) are compositionally biased toward gly residues. A compositionally biased stretch (low complexity) spans 687–697 (LTGFPGAAGRT). Gly residues predominate over residues 734–743 (GETGAGGPPG). Low complexity-rich tracts occupy residues 751-778 (SGEP…LGLP), 786-799 (LPGV…PGPL), 846-868 (YAGN…VGPA), and 877-897 (PGPA…PSGP). Over residues 901 to 912 (RGDKGEAGDKGP) the composition is skewed to basic and acidic residues. Residues 987 to 997 (PAGPPGPPGPP) are compositionally biased toward pro residues.

The protein belongs to the fibrillar collagen family. As to quaternary structure, trimers of one alpha 2(I) and two alpha 1(I) chains. Interacts (via C-terminus) with TMEM131 (via PapD-L domain); the interaction is direct and is involved in assembly and TRAPPIII ER-to-Golgi transport complex-dependent secretion of collagen. In terms of processing, prolines at the third position of the tripeptide repeating unit (G-X-Y) are hydroxylated in some or all of the chains. As to expression, expressed in bones.

It localises to the secreted. The protein resides in the extracellular space. Its subcellular location is the extracellular matrix. Its function is as follows. Type I collagen is a member of group I collagen (fibrillar forming collagen). The chain is Collagen alpha-2(I) chain from Doedicurus sp. (South American giant glyptodont).